Consider the following 692-residue polypeptide: Elongation factor G (692 aa).

A tr-type G domain is found at aspartate 8–leucine 283. GTP-binding positions include alanine 17–threonine 24, aspartate 81–histidine 85, and asparagine 135–aspartate 138.

Belongs to the TRAFAC class translation factor GTPase superfamily. Classic translation factor GTPase family. EF-G/EF-2 subfamily.

Its subcellular location is the cytoplasm. Functionally, catalyzes the GTP-dependent ribosomal translocation step during translation elongation. During this step, the ribosome changes from the pre-translocational (PRE) to the post-translocational (POST) state as the newly formed A-site-bound peptidyl-tRNA and P-site-bound deacylated tRNA move to the P and E sites, respectively. Catalyzes the coordinated movement of the two tRNA molecules, the mRNA and conformational changes in the ribosome. The sequence is that of Elongation factor G from Rhodospirillum rubrum (strain ATCC 11170 / ATH 1.1.1 / DSM 467 / LMG 4362 / NCIMB 8255 / S1).